Consider the following 114-residue polypeptide: MQLVLMAAVLALAEVGCFGCHLKNVSIPMERCGQRVCIHTTICEGLCFSEDAVFESPDEAPEHRVCNGDWSYEVKHIQGCPESITYPVATNCYCSACNTKDTYCTRLYAHIPSC.

A signal peptide spans 1 to 19 (MQLVLMAAVLALAEVGCFG). Intrachain disulfides connect cysteine 20/cysteine 66, cysteine 32/cysteine 80, cysteine 37/cysteine 114, cysteine 43/cysteine 92, cysteine 47/cysteine 94, and cysteine 97/cysteine 104. N-linked (GlcNAc...) asparagine glycosylation occurs at asparagine 24.

This sequence belongs to the glycoprotein hormones subunit beta family. As to quaternary structure, heterodimer of an alpha and a beta chain.

The protein resides in the secreted. In terms of biological role, involved in gametogenesis and steroidogenesis. This Fundulus heteroclitus (Killifish) protein is Gonadotropin subunit beta-1 (cgba).